A 458-amino-acid polypeptide reads, in one-letter code: Acyl-CoA-binding domain-containing protein 5 (458 aa).

The ACB domain occupies 8 to 97 (HQTRFEAAVS…MKKILETMPV (90 aa)). Residues 19-28 (IQSLPKNGSF), 39-43 (YSFYK), lysine 65, and tyrosine 84 each bind an acyl-CoA. 2 disordered regions span residues 119–248 (KHGR…REED) and 296–369 (TETS…GPNG). Positions 125-139 (GVTSELGSVLTSTPN) are enriched in polar residues. Positions 154–188 (AESDEEQAATKEVREEDEEEESEHSEQEDKDVEQQ) form a coiled coil. Composition is skewed to basic and acidic residues over residues 177-195 (HSEQ…EKPA), 303-313 (ELKDGGEDGKQ), and 322-338 (TWSE…ERPS). Residues 343–356 (GGDGSRSGQIGSGG) show a composition bias toward gly residues. Positions 373–402 (EQIAVVLMRLQEDMQNVLQRLHSLEVQTAS) form a coiled coil. Residues 430-450 (GTLALAVVWPFVVHWLMHVFL) form a helical membrane-spanning segment.

This sequence belongs to the ATG37 family.

The protein resides in the peroxisome membrane. Functionally, acyl-CoA binding protein which acts as the peroxisome receptor for pexophagy but is dispensable for aggrephagy and nonselective autophagy. Binds medium- and long-chain acyl-CoA esters. The sequence is that of Acyl-CoA-binding domain-containing protein 5 (acbd5) from Xenopus tropicalis (Western clawed frog).